A 154-amino-acid chain; its full sequence is Myoglobin (154 aa).

Residues 2–148 (GLSDGEWQLV…FRKDMASNYK (147 aa)) form the Globin domain. Residue Ser4 is modified to Phosphoserine. Residue His65 participates in nitrite binding. Residue His65 coordinates O2. Phosphothreonine is present on Thr68. Heme b is bound at residue His94.

This sequence belongs to the globin family. Monomeric.

It is found in the cytoplasm. The protein localises to the sarcoplasm. The enzyme catalyses Fe(III)-heme b-[protein] + nitric oxide + H2O = Fe(II)-heme b-[protein] + nitrite + 2 H(+). It catalyses the reaction H2O2 + AH2 = A + 2 H2O. Functionally, monomeric heme protein which primary function is to store oxygen and facilitate its diffusion within muscle tissues. Reversibly binds oxygen through a pentacoordinated heme iron and enables its timely and efficient release as needed during periods of heightened demand. Depending on the oxidative conditions of tissues and cells, and in addition to its ability to bind oxygen, it also has a nitrite reductase activity whereby it regulates the production of bioactive nitric oxide. Under stress conditions, like hypoxia and anoxia, it also protects cells against reactive oxygen species thanks to its pseudoperoxidase activity. The polypeptide is Myoglobin (MB) (Gorilla gorilla beringei (Mountain gorilla)).